Here is a 262-residue protein sequence, read N- to C-terminus: Tryptophan synthase alpha chain (262 aa).

Catalysis depends on proton acceptor residues Glu-51 and Asp-62.

It belongs to the TrpA family. As to quaternary structure, tetramer of two alpha and two beta chains.

It catalyses the reaction (1S,2R)-1-C-(indol-3-yl)glycerol 3-phosphate + L-serine = D-glyceraldehyde 3-phosphate + L-tryptophan + H2O. The protein operates within amino-acid biosynthesis; L-tryptophan biosynthesis; L-tryptophan from chorismate: step 5/5. In terms of biological role, the alpha subunit is responsible for the aldol cleavage of indoleglycerol phosphate to indole and glyceraldehyde 3-phosphate. In Oceanobacillus iheyensis (strain DSM 14371 / CIP 107618 / JCM 11309 / KCTC 3954 / HTE831), this protein is Tryptophan synthase alpha chain.